The following is an 802-amino-acid chain: G-type lectin S-receptor-like serine/threonine-protein kinase At1g61550 (802 aa).

An N-terminal signal peptide occupies residues 1-19 (MTRFACFLFSTLLLSFSYA). In terms of domain architecture, Bulb-type lectin spans 20–139 (AITPTSPLSI…VSGITLWQSF (120 aa)). Residues 20 to 421 (AITPTSPLSI…EMGGNQRKKT (402 aa)) lie on the Extracellular side of the membrane. N-linked (GlcNAc...) asparagine glycosylation is found at Asn-48, Asn-89, Asn-112, Asn-231, and Asn-262. In terms of domain architecture, EGF-like spans 273 to 309 (PANTCDFYGVCGPFGLCVMSIPPKCKCFKGFVPQFSE). 2 disulfides stabilise this stretch: Cys-277-Cys-289 and Cys-283-Cys-297. Residues Asn-315, Asn-331, and Asn-370 are each glycosylated (N-linked (GlcNAc...) asparagine). The 83-residue stretch at 328 to 410 (CQGNSTGRHV…GELLSIRLAS (83 aa)) folds into the PAN domain. 2 disulfides stabilise this stretch: Cys-363-Cys-384 and Cys-367-Cys-373. The chain crosses the membrane as a helical span at residues 422–442 (IIASIVSISLFVTLASAAFGF). The Cytoplasmic portion of the chain corresponds to 443–802 (WRYRLKHNAI…EVTQSVVLGR (360 aa)). Residues 489–774 (FSLVNKLGQG…DLPLPKEPTF (286 aa)) enclose the Protein kinase domain. ATP-binding positions include 495–503 (LGQGGFGPV) and Lys-517. A phosphoserine mark is found at Ser-523 and Ser-538. A caM-binding region spans residues 578–595 (RKRVEIDWPKRFSIIQGI). Asp-614 serves as the catalytic Proton acceptor. A phosphoserine mark is found at Ser-618 and Ser-631. Phosphothreonine is present on Thr-648. A Phosphoserine modification is found at Ser-691.

Belongs to the protein kinase superfamily. Ser/Thr protein kinase family.

It is found in the cell membrane. The enzyme catalyses L-seryl-[protein] + ATP = O-phospho-L-seryl-[protein] + ADP + H(+). The catalysed reaction is L-threonyl-[protein] + ATP = O-phospho-L-threonyl-[protein] + ADP + H(+). The protein is G-type lectin S-receptor-like serine/threonine-protein kinase At1g61550 of Arabidopsis thaliana (Mouse-ear cress).